The sequence spans 382 residues: Leucine carboxyl methyltransferase 1 (382 aa).

Polar residues predominate over residues 1–11 (MSAPQIPNLNT). The tract at residues 1–45 (MSAPQIPNLNTLRRGGGRGRFRARGGPDSSSSSGNKDRVVQGTDN) is disordered. S-adenosyl-L-methionine-binding positions include Arg88, Gly121, Asp146, 193–194 (DL), and Glu230.

The protein belongs to the methyltransferase superfamily. LCMT family.

It carries out the reaction [phosphatase 2A protein]-C-terminal L-leucine + S-adenosyl-L-methionine = [phosphatase 2A protein]-C-terminal L-leucine methyl ester + S-adenosyl-L-homocysteine. Methylates the carboxyl group of the C-terminal leucine residue of protein phosphatase 2A catalytic subunits to form alpha-leucine ester residues. This Emericella nidulans (strain FGSC A4 / ATCC 38163 / CBS 112.46 / NRRL 194 / M139) (Aspergillus nidulans) protein is Leucine carboxyl methyltransferase 1 (ppm1).